The sequence spans 101 residues: UPF0235 protein MmarC5_0538 (101 aa).

The protein belongs to the UPF0235 family.

In Methanococcus maripaludis (strain C5 / ATCC BAA-1333), this protein is UPF0235 protein MmarC5_0538.